Here is a 369-residue protein sequence, read N- to C-terminus: Ferrochelatase (369 aa).

Positions 210 and 291 each coordinate Fe cation.

This sequence belongs to the ferrochelatase family.

The protein localises to the cytoplasm. The catalysed reaction is heme b + 2 H(+) = protoporphyrin IX + Fe(2+). It functions in the pathway porphyrin-containing compound metabolism; protoheme biosynthesis; protoheme from protoporphyrin-IX: step 1/1. In terms of biological role, catalyzes the ferrous insertion into protoporphyrin IX. The protein is Ferrochelatase of Thioalkalivibrio sulfidiphilus (strain HL-EbGR7).